We begin with the raw amino-acid sequence, 968 residues long: RNA polymerase-associated protein RapA (968 aa).

The Helicase ATP-binding domain maps to 164-334 (DVGRRHAPRV…FARLRLLDPN (171 aa)). An ATP-binding site is contributed by 177-184 (DEVGLGKT). Residues 280-283 (DEAH) carry the DEAH box motif. The 173-residue stretch at 490 to 662 (RVEWLMGYLT…YLASPDQTEG (173 aa)) folds into the Helicase C-terminal domain.

This sequence belongs to the SNF2/RAD54 helicase family. RapA subfamily. As to quaternary structure, interacts with the RNAP. Has a higher affinity for the core RNAP than for the holoenzyme. Its ATPase activity is stimulated by binding to RNAP.

In terms of biological role, transcription regulator that activates transcription by stimulating RNA polymerase (RNAP) recycling in case of stress conditions such as supercoiled DNA or high salt concentrations. Probably acts by releasing the RNAP, when it is trapped or immobilized on tightly supercoiled DNA. Does not activate transcription on linear DNA. Probably not involved in DNA repair. In Escherichia fergusonii (strain ATCC 35469 / DSM 13698 / CCUG 18766 / IAM 14443 / JCM 21226 / LMG 7866 / NBRC 102419 / NCTC 12128 / CDC 0568-73), this protein is RNA polymerase-associated protein RapA.